The sequence spans 1157 residues: ATP-dependent helicase/deoxyribonuclease subunit B (1157 aa).

The UvrD-like helicase ATP-binding domain maps to 1–299 (MSIRFIIGRA…SHLEKYFFVR (299 aa)). 8 to 15 (GRAGAGKT) serves as a coordination point for ATP. Residues 279–590 (GNTARFKSPA…LVASLERSRN (312 aa)) form the UvrD-like helicase C-terminal domain. Positions 792, 1112, 1115, and 1121 each coordinate [4Fe-4S] cluster.

Belongs to the helicase family. AddB/RexB type 1 subfamily. Heterodimer of AddA and AddB. Mg(2+) is required as a cofactor. It depends on [4Fe-4S] cluster as a cofactor.

In terms of biological role, the heterodimer acts as both an ATP-dependent DNA helicase and an ATP-dependent, dual-direction single-stranded exonuclease. Recognizes the chi site generating a DNA molecule suitable for the initiation of homologous recombination. The AddB subunit has 5' -&gt; 3' nuclease activity but not helicase activity. The sequence is that of ATP-dependent helicase/deoxyribonuclease subunit B from Pelotomaculum thermopropionicum (strain DSM 13744 / JCM 10971 / SI).